The primary structure comprises 354 residues: S-adenosylmethionine:tRNA ribosyltransferase-isomerase (354 aa).

Belongs to the QueA family. In terms of assembly, monomer.

It localises to the cytoplasm. It catalyses the reaction 7-aminomethyl-7-carbaguanosine(34) in tRNA + S-adenosyl-L-methionine = epoxyqueuosine(34) in tRNA + adenine + L-methionine + 2 H(+). It participates in tRNA modification; tRNA-queuosine biosynthesis. Functionally, transfers and isomerizes the ribose moiety from AdoMet to the 7-aminomethyl group of 7-deazaguanine (preQ1-tRNA) to give epoxyqueuosine (oQ-tRNA). This is S-adenosylmethionine:tRNA ribosyltransferase-isomerase from Thermosynechococcus vestitus (strain NIES-2133 / IAM M-273 / BP-1).